The primary structure comprises 868 residues: Leucine--tRNA ligase (868 aa).

The 'HIGH' region signature appears at 42–52 (PYPSGKLHMGH). Residues 627–631 (KMSKS) carry the 'KMSKS' region motif. Residue Lys-630 participates in ATP binding.

Belongs to the class-I aminoacyl-tRNA synthetase family.

It is found in the cytoplasm. It carries out the reaction tRNA(Leu) + L-leucine + ATP = L-leucyl-tRNA(Leu) + AMP + diphosphate. This Pseudomonas putida (strain ATCC 47054 / DSM 6125 / CFBP 8728 / NCIMB 11950 / KT2440) protein is Leucine--tRNA ligase.